We begin with the raw amino-acid sequence, 70 residues long: Brevinin-1CG3 (70 aa).

An N-terminal signal peptide occupies residues 1-22 (MFTLKKSLLLLFFLGTINLSLC). Residues 23 to 44 (EQERNAEEERRDDSDKRDVEVE) constitute a propeptide, removed in mature form. A disulfide bridge links C64 with C70.

It belongs to the frog skin active peptide (FSAP) family. Brevinin subfamily. As to expression, expressed by the skin glands.

The protein localises to the secreted. Functionally, antimicrobial peptide active against a variety of Gram-positive and some Gram-negative bacterial strains. Has antifungal activity against a slime mold isolate. Has hemolytic activity against human erythrocytes. This Amolops chunganensis (Chungan torrent frog) protein is Brevinin-1CG3.